A 959-amino-acid chain; its full sequence is Protein moonraker (959 aa).

Positions 124-156 are disordered; that stretch reads LPHSSHKGMHTKVERKDSKSQDVCHCSHQPSRV. A compositionally biased stretch (basic and acidic residues) spans 134 to 145; sequence TKVERKDSKSQD. Ser-279 bears the Phosphoserine mark. The span at 456-470 shows a compositional bias: basic and acidic residues; that stretch reads EEAPRIEDNGTDFKD. 2 disordered regions span residues 456–560 and 572–610; these read EEAP…ASPK and RDAAKEQSLQQEDIHKESQLRGDAEQEAARLSWPDAESS. A compositionally biased stretch (polar residues) spans 515–533; that stretch reads PNQPYSKSRLQQTTVSSRL. Over residues 547 to 558 the composition is skewed to pro residues; that stretch reads WIPPNPTSPPAS. The stretch at 582 to 674 forms a coiled coil; it reads QEDIHKESQL…TQLADKVEEA (93 aa). Basic and acidic residues predominate over residues 583 to 599; sequence EDIHKESQLRGDAEQEA. Ser-691 is modified (phosphoserine). 2 disordered regions span residues 692–721 and 848–883; these read SVEANSHLKDRPSRHAAAAAQPAEQASDVP and LDESVTTEEGSEKREAPLPLSREDLHQRKGQTPLSV. Over residues 707–717 the composition is skewed to low complexity; that stretch reads AAAAAQPAEQA. A compositionally biased stretch (basic and acidic residues) spans 857–874; the sequence is GSEKREAPLPLSREDLHQ. The segment at 877–959 is necessary and sufficient for CEP20-binding; the sequence is GQTPLSVPPR…FTSEFLEAAA (83 aa).

In terms of assembly, interacts with CEP63 and WDR62. Forms a complex with OFD1 and CEP20/FOR20. Interacts with PCM1.

The protein resides in the cytoplasm. It is found in the cytoskeleton. The protein localises to the microtubule organizing center. Its subcellular location is the centrosome. It localises to the centriolar satellite. Involved in centriole duplication. Positively regulates CEP63 centrosomal localization. Required for WDR62 centrosomal localization and promotes the centrosomal localization of CDK2. May play a role in cilium assembly. The chain is Protein moonraker (Kiaa0753) from Mus musculus (Mouse).